A 358-amino-acid chain; its full sequence is Cytoplasmic tRNA 2-thiolation protein 1 (358 aa).

Belongs to the TtcA family. CTU1/NCS6/ATPBD3 subfamily.

The protein localises to the cytoplasm. It participates in tRNA modification; 5-methoxycarbonylmethyl-2-thiouridine-tRNA biosynthesis. Its function is as follows. Plays a central role in 2-thiolation of mcm(5)S(2)U at tRNA wobble positions of tRNA(Lys), tRNA(Glu) and tRNA(Gln). Directly binds tRNAs and probably acts by catalyzing adenylation of tRNAs, an intermediate required for 2-thiolation. It is unclear whether it acts as a sulfurtransferase that transfers sulfur from thiocarboxylated URM1 onto the uridine of tRNAs at wobble position. Prior mcm(5) tRNA modification by the elongator complex is required for 2-thiolation. May also be involved in protein urmylation. This chain is Cytoplasmic tRNA 2-thiolation protein 1, found in Candida glabrata (strain ATCC 2001 / BCRC 20586 / JCM 3761 / NBRC 0622 / NRRL Y-65 / CBS 138) (Yeast).